The primary structure comprises 492 residues: Trichothecene C-15 hydroxylase (492 aa).

The chain crosses the membrane as a helical span at residues 6–26 (LWPLLALSGGTGLAYLVVVVV). Basic and acidic residues predominate over residues 88-106 (AMKDVRGHRKSGEPEHGKD). The segment at 88–116 (AMKDVRGHRKSGEPEHGKDPISVQSNGDN) is disordered. N-linked (GlcNAc...) asparagine glycans are attached at residues asparagine 124, asparagine 198, and asparagine 290. Cysteine 438 serves as a coordination point for heme.

Belongs to the cytochrome P450 family. Requires heme as cofactor.

The protein resides in the membrane. The protein operates within sesquiterpene biosynthesis; trichothecene biosynthesis. Its function is as follows. Trichothecene C-15 hydroxylase; part of the core gene cluster that mediates the biosynthesis of trichothecenes, a very large family of chemically related bicyclic sesquiterpene compounds acting as mycotoxins, including T2-toxin. The biosynthesis of trichothecenes begins with the cyclization of farnesyl diphosphate to trichodiene and is catalyzed by the trichodiene synthase TRI5. Trichodiene undergoes a series of oxygenations catalyzed by the cytochrome P450 monooxygenase TRI4. TRI4 controls the addition of four oxygens at C-2, C-3, C-11, and the C-12, C-13-epoxide to form the intermediate isotrichotriol. Isotrichotriol then undergoes a non-enzymatic isomerization and cyclization to form isotrichodermol. During this process, the oxygen at the C-2 position becomes the pyran ring oxygen and the hydroxyl group at C-11 is lost. More complex type A trichothecenes are built by modifying isotrichodermol through a series of paired hydroxylation and acetylation or acylation steps. Isotrichodermol is converted to isotrichodermin by the acetyltransferase TRI101. TRI101 encodes a C-3 transacetylase that acts as a self-protection or resistance factor during biosynthesis and that the presence of a free C-3 hydroxyl group is a key component of Fusarium trichothecene phytotoxicity. A second hydroxyl group is added to C-15 by the trichothecene C-15 hydroxylase TRI11, producing 15-decalonectrin, which is then acetylated by TRI3, producing calonectrin. A third hydroxyl group is added at C-4 by the cytochrome P450 monooxygenase TRI13, converting calonectrin to 3,15-diacetoxyspirpenol, which is subsequently acetylated by the acetyltransferase TRI7. A fourth hydroxyl group is added to C-8 by the cytochrome P450 monooxygenase TRI1, followed by the addition of an isovaleryl moiety by TRI16. Finally, the acetyl group is removed from the C-3 position by the trichothecene C-3 esterase TRI8 to produce T-2 toxin. The sequence is that of Trichothecene C-15 hydroxylase from Fusarium sporotrichioides.